An 87-amino-acid polypeptide reads, in one-letter code: Potassium channel toxin Tdi-beta-KTx (87 aa).

The first 19 residues, 1 to 19, serve as a signal peptide directing secretion; sequence MERKLALLLLLGMITLASS. Positions 20–27 are excised as a propeptide; it reads GLREKHVQ. Residues 53-87 enclose the BetaSPN-type CS-alpha/beta domain; it reads QFGCPAYEGYCMNHCQDIERHDGSCHGFKCKCEKS. 3 disulfide bridges follow: Cys-56/Cys-77, Cys-63/Cys-82, and Cys-67/Cys-84.

In terms of tissue distribution, expressed by the venom gland.

The protein resides in the secreted. Functionally, inhibits voltage-gated potassium channel. The polypeptide is Potassium channel toxin Tdi-beta-KTx (Tityus discrepans (Venezuelan scorpion)).